A 937-amino-acid polypeptide reads, in one-letter code: von Willebrand factor (937 aa).

An N-terminal signal peptide occupies residues 1-22; it reads MFPTRLARLLLAVALTLPGALC. A propeptide spanning residues 23–762 is cleaved from the precursor; the sequence is GEGALGKSSM…SSPLSHRSKR (740 aa). The region spanning 33-201 is the VWFD 1 domain; it reads ARCSLFGADF…ALSSEEQRCP (169 aa). 2 disulfides stabilise this stretch: Cys-35/Cys-162 and Cys-57/Cys-200. Residues Asn-99, Asn-156, and Asn-211 are each glycosylated (N-linked (GlcNAc...) asparagine). Positions 294-347 constitute a TIL 1 domain; it reads CPTGMEYKECVSPCHRTCRSLSITEVCREQCVDGCSCPEGQLLDEGRCVESTEC. One can recognise a VWFD 2 domain in the interval 385-559; that stretch reads GECLITGQSH…NSWKLRADCE (175 aa). 3 cysteine pairs are disulfide-bonded: Cys-387–Cys-523, Cys-409–Cys-558, and Cys-431–Cys-439. In terms of domain architecture, TIL 2 spans 651-706; it reads CPHGQVYQQCGTPCNLTCRSLSHPDEECTEVCLEGCFCPPGLFLDETGSCVPKAQC. The N-linked (GlcNAc...) asparagine glycan is linked to Asn-665. Positions 763-786 are amino-terminal; sequence SLSCRPPMVKVVCPADNPRAEGLE. Cystine bridges form between Cys-766–Cys-807 and Cys-775–Cys-803. Residues 787–832 are E1; it reads CTKTCQNYDLECMSTGCVSGCLPAPGMVRHENRCVALERCPCFHQG. Positions 825-852 are CX; it reads RCPCFHQGREYAPGDRVKVDCNSCVCQD. An N-linked (GlcNAc...) asparagine glycan is attached at Asn-856. A VWFD 3 domain is found at 864–937; that stretch reads ASCSALGLAH…VEGGEIELFD (74 aa). A disulfide bridge links Cys-913 with Cys-920.

In terms of assembly, multimeric. Interacts with F8. Post-translationally, all cysteine residues are involved in intrachain or interchain disulfide bonds. N- and O-glycosylated. In terms of tissue distribution, plasma.

Its subcellular location is the secreted. The protein resides in the extracellular space. It localises to the extracellular matrix. In terms of biological role, important in the maintenance of hemostasis, it promotes adhesion of platelets to the sites of vascular injury by forming a molecular bridge between sub-endothelial collagen matrix and platelet-surface receptor complex GPIb-IX-V. Also acts as a chaperone for coagulation factor VIII, delivering it to the site of injury, stabilizing its heterodimeric structure and protecting it from premature clearance from plasma. This is von Willebrand factor (VWF) from Bos taurus (Bovine).